Consider the following 382-residue polypeptide: UDP-4-amino-4-deoxy-L-arabinose--oxoglutarate aminotransferase (382 aa).

An N6-(pyridoxal phosphate)lysine modification is found at lysine 182.

It belongs to the DegT/DnrJ/EryC1 family. ArnB subfamily. As to quaternary structure, homodimer. It depends on pyridoxal 5'-phosphate as a cofactor.

The catalysed reaction is UDP-4-amino-4-deoxy-beta-L-arabinose + 2-oxoglutarate = UDP-beta-L-threo-pentopyranos-4-ulose + L-glutamate. It functions in the pathway nucleotide-sugar biosynthesis; UDP-4-deoxy-4-formamido-beta-L-arabinose biosynthesis; UDP-4-deoxy-4-formamido-beta-L-arabinose from UDP-alpha-D-glucuronate: step 2/3. It participates in bacterial outer membrane biogenesis; lipopolysaccharide biosynthesis. In terms of biological role, catalyzes the conversion of UDP-4-keto-arabinose (UDP-Ara4O) to UDP-4-amino-4-deoxy-L-arabinose (UDP-L-Ara4N). The modified arabinose is attached to lipid A and is required for resistance to polymyxin and cationic antimicrobial peptides. The chain is UDP-4-amino-4-deoxy-L-arabinose--oxoglutarate aminotransferase from Yersinia enterocolitica serotype O:8 / biotype 1B (strain NCTC 13174 / 8081).